A 115-amino-acid chain; its full sequence is MHRLRAYCVISALSDTLLAFCTSSAELYEGPLRQYRIKATQIRRWFGRRACRTIPIRHDPVECPEPRSCPCSYHSRLWSKRLGRTQISRRLQTARRLNPERSTAWSYLARQVLYY.

This is an uncharacterized protein from Saccharomyces cerevisiae (strain ATCC 204508 / S288c) (Baker's yeast).